Here is a 503-residue protein sequence, read N- to C-terminus: GMP synthase [glutamine-hydrolyzing] (503 aa).

The 187-residue stretch at 3-189 (PVLVVDFGSQ…AFLSSFAAPN (187 aa)) folds into the Glutamine amidotransferase type-1 domain. Cys80 acts as the Nucleophile in catalysis. Active-site residues include His165 and Glu167. The GMPS ATP-PPase domain maps to 190 to 380 (WDPEQTICGT…LGIPKHIVHR (191 aa)). An ATP-binding site is contributed by 217-223 (SGGVDSV).

As to quaternary structure, homodimer.

The enzyme catalyses XMP + L-glutamine + ATP + H2O = GMP + L-glutamate + AMP + diphosphate + 2 H(+). It functions in the pathway purine metabolism; GMP biosynthesis; GMP from XMP (L-Gln route): step 1/1. In terms of biological role, catalyzes the synthesis of GMP from XMP. The sequence is that of GMP synthase [glutamine-hydrolyzing] from Tropheryma whipplei (strain TW08/27) (Whipple's bacillus).